The following is a 309-amino-acid chain: Golgi to ER traffic protein 4 homolog (309 aa).

The segment at 290-309 (SGGGLASMEVDGPTIEDEMD) is disordered.

This sequence belongs to the GET4 family.

In terms of biological role, may play a role in insertion of tail-anchored proteins into the endoplasmic reticulum membrane. This is Golgi to ER traffic protein 4 homolog from Dictyostelium discoideum (Social amoeba).